A 118-amino-acid chain; its full sequence is MARVKRGVIARKRHKKILKLAKGYYGARSRVFRVAKQAVIKAGQYAYRDRRQKKRQFRALWIARINAGARTNGLSYSRLIAGLKKASIEIDRKVLADLAVNEKAAFAAIVEKAKAVLA.

It belongs to the bacterial ribosomal protein bL20 family.

Binds directly to 23S ribosomal RNA and is necessary for the in vitro assembly process of the 50S ribosomal subunit. It is not involved in the protein synthesizing functions of that subunit. The protein is Large ribosomal subunit protein bL20 of Pseudomonas entomophila (strain L48).